A 343-amino-acid chain; its full sequence is Probable dual-specificity RNA methyltransferase RlmN (343 aa).

The Proton acceptor role is filled by E91. In terms of domain architecture, Radical SAM core spans 97-326 (HPDRITACIS…AEIRREKGSD (230 aa)). Residues C104 and C331 are joined by a disulfide bond. The [4Fe-4S] cluster site is built by C111, C115, and C118. S-adenosyl-L-methionine-binding positions include 158–159 (GE), S190, 213–215 (SLH), and N289. Residue C331 is the S-methylcysteine intermediate of the active site.

The protein belongs to the radical SAM superfamily. RlmN family. [4Fe-4S] cluster serves as cofactor.

The protein localises to the cytoplasm. The enzyme catalyses adenosine(2503) in 23S rRNA + 2 reduced [2Fe-2S]-[ferredoxin] + 2 S-adenosyl-L-methionine = 2-methyladenosine(2503) in 23S rRNA + 5'-deoxyadenosine + L-methionine + 2 oxidized [2Fe-2S]-[ferredoxin] + S-adenosyl-L-homocysteine. It catalyses the reaction adenosine(37) in tRNA + 2 reduced [2Fe-2S]-[ferredoxin] + 2 S-adenosyl-L-methionine = 2-methyladenosine(37) in tRNA + 5'-deoxyadenosine + L-methionine + 2 oxidized [2Fe-2S]-[ferredoxin] + S-adenosyl-L-homocysteine. Specifically methylates position 2 of adenine 2503 in 23S rRNA and position 2 of adenine 37 in tRNAs. This chain is Probable dual-specificity RNA methyltransferase RlmN, found in Thermotoga sp. (strain RQ2).